The chain runs to 757 residues: MDVNPTLLFLKVPAQNAISTTFPYTGDPPYSHGTGTGYTMDTVNRTHQYSERGRWTTNTETGAPQLNPIDGPLPEDNEPSGYAQTDCVLEAMAFLEESHPGIFENSCIETMEVVQQTRVDKLTQGRQTYDWTLNRNQPAATALANTIEVFRSNGLTANESGRLIDFLKDVMESMDKEEMEITTHFQRKRRVRDNVTKKMVTQRTIGKRKQRLNKRSYLIRALTLNTMTKDAERGKLKRRAIATPGMQIRGFVYFVETLARSICEKLEQSGLPVGGNEKKAKLANVVRKMMTNSQDTEISFTITGDNTKWNENQNPRMFLAMITYMTRNQPEWFRNVLSIAPIMFSNKMARLGKGYMFESKSMKLRTQIPAEMLANIDLKYFNDSTRKKIEKIRPLLIDGTASLSPGMMMGMFNMLSTVLGVSILNLGQKRYTKTTYWWDGLQSSDDFALIVNAPNHEGIQAGVDRFYRTCKLLGINMSKKKSYINRTGTFEFTSFFYRYGFVANFSMELPSFGVSGINESADMSIGVTVIKNNMINNDLGPATAQMALQLFIKDYRYTYRCHRGDTQIQTRRSFEIKKLWEQTRSKAGLLVSDGGPNLFNIRNLHIPEVCLKWELMDEDYQGRLCNPLNPFVSHKEIESVNNAVMMPAHGPAKNMEYDAVATTHSWIPKRNRSILNTSQRGILEDEQMYQRCCNLFEKFFPSSSYRRPVGISSMVEAMVSRARIDARIDFESGRIKKEEFTEIMKICSTIEELRRQK.

The interval 53-82 (GRWTTNTETGAPQLNPIDGPLPEDNEPSGY) is disordered. Residues 55–64 (WTTNTETGAP) are compositionally biased toward polar residues. 2 consecutive short sequence motifs (nuclear localization signal) follow at residues 187 to 195 (RKRRVRDNV) and 203 to 216 (RTIG…NKRS). Residues 249 to 256 (RGFVYFVE) form a promoter-binding site region. Residues 286-483 (VRKMMTNSQD…GINMSKKKSY (198 aa)) enclose the RdRp catalytic domain.

Belongs to the influenza viruses polymerase PB1 family. As to quaternary structure, influenza RNA polymerase is composed of three subunits: PB1, PB2 and PA. Interacts (via N-terminus) with PA (via C-terminus). Interacts (via C-terminus) with PB2 (via N-terminus); this interaction is essential for transcription initiation. Interacts (via C-terminus) with human PKP2 (via N-terminus); the interaction competitively inhibits the interaction between the RNA polymerase subunits PB1 and PB2. Phosphorylated by host PRKCA.

It localises to the host nucleus. The protein resides in the host cytoplasm. It carries out the reaction RNA(n) + a ribonucleoside 5'-triphosphate = RNA(n+1) + diphosphate. Its function is as follows. RNA-dependent RNA polymerase which is responsible for replication and transcription of virus RNA segments. The transcription of viral mRNAs occurs by a unique mechanism called cap-snatching. 5' methylated caps of cellular mRNAs are cleaved after 10-13 nucleotides by PA. In turn, these short capped RNAs are used as primers by PB1 for transcription of viral mRNAs. During virus replication, PB1 initiates RNA synthesis and copy vRNA into complementary RNA (cRNA) which in turn serves as a template for the production of more vRNAs. This chain is RNA-directed RNA polymerase catalytic subunit, found in Influenza A virus (strain A/USA:Iowa/1943 H1N1).